We begin with the raw amino-acid sequence, 211 residues long: BAG family molecular chaperone regulator 2 (211 aa).

Position 2 is an N-acetylalanine (Ala2). Residues Ser20, Ser31, and Ser73 each carry the phosphoserine modification. Residues 20–61 (SMADRSSRLLESLDQLELRVEALREAATAVEQEKEILLEMIH) adopt a coiled-coil conformation. Positions 109-189 (SLKHATRIID…NIENSDKAIK (81 aa)) constitute a BAG domain.

In terms of assembly, binds to the ATPase domain of HSP/HSC70 chaperones. May interact with NWD1. Interacts with HSPA1A (via NBD), HSPA1B (via NBD) and HSPA8. May interact with DNJC9; the interaction seems to be histone-dependent.

Functionally, co-chaperone for HSP70 and HSC70 chaperone proteins. Acts as a nucleotide-exchange factor (NEF) promoting the release of ADP from the HSP70 and HSC70 proteins thereby triggering client/substrate protein release. The sequence is that of BAG family molecular chaperone regulator 2 (BAG2) from Homo sapiens (Human).